A 526-amino-acid chain; its full sequence is MSNSLEFPWLSALVLLPLLAAFGIPLLPQSRWARWYALAVGALDLGLMAYIFGWHYDLRDFSLQLAERYAWVPQIGFHWSLAVDGLSFPLVLLSGLITTLAIVAAWNLTHKPRLFFFLLLLMYGAQVGVFLAQDLLLFFLMWEIELVPVYLLIAIWGGPQRQYAATKFILYTAAASIFILVGSLAMAFGSEGFSLEMAELGAKSYPLALQILAYAAFLIAFGVKLPVFPLHTWLPDAHSEASAPISMILAGVLLKMGGYGLIRLNVGILSEAHVYFAPVLAVLGAVNIVYGALAALGQNYLKRRLAYSSIAHMGFVLIGIAAFTELGLNGALLQMISHGLIAAVLFFLTGITYERTHTLALDKLGGLAKQMPKAFALFTAGSLASLALPGMSGFVGELTVFLGLITSDAYAPTFKAGIALLAAVGIILTPIYLLSMLRQVFYGAQDPGLVLEDYLGDLRPREMAVALCLLLPILGIGLYPRLATQTYDVTTVAVAAQLRSALPTEIVQRPLLPVQPAQVAALPPTD.

A run of 14 helical transmembrane segments spans residues 7 to 27 (FPWLSALVLLPLLAAFGIPLL), 35 to 55 (WYALAVGALDLGLMAYIFGWH), 86 to 106 (LSFPLVLLSGLITTLAIVAAW), 114 to 134 (LFFFLLLLMYGAQVGVFLAQD), 135 to 155 (LLLFFLMWEIELVPVYLLIAI), 168 to 188 (FILYTAAASIFILVGSLAMAF), 208 to 228 (ALQILAYAAFLIAFGVKLPVF), 242 to 262 (SAPISMILAGVLLKMGGYGLI), 276 to 296 (FAPVLAVLGAVNIVYGALAAL), 310 to 330 (IAHMGFVLIGIAAFTELGLNG), 331 to 351 (ALLQMISHGLIAAVLFFLTGI), 374 to 396 (AFALFTAGSLASLALPGMSGFVG), 417 to 437 (GIALLAAVGIILTPIYLLSML), and 463 to 483 (MAVALCLLLPILGIGLYPRLA).

Belongs to the complex I subunit 4 family.

It is found in the cellular thylakoid membrane. The enzyme catalyses a plastoquinone + NADH + (n+1) H(+)(in) = a plastoquinol + NAD(+) + n H(+)(out). The catalysed reaction is a plastoquinone + NADPH + (n+1) H(+)(in) = a plastoquinol + NADP(+) + n H(+)(out). Its function is as follows. NDH-1 shuttles electrons from NAD(P)H, via FMN and iron-sulfur (Fe-S) centers, to quinones in the respiratory chain. The immediate electron acceptor for the enzyme in this species is believed to be plastoquinone. Couples the redox reaction to proton translocation (for every two electrons transferred, four hydrogen ions are translocated across the cytoplasmic membrane), and thus conserves the redox energy in a proton gradient. In Synechococcus sp. (strain JA-3-3Ab) (Cyanobacteria bacterium Yellowstone A-Prime), this protein is NAD(P)H-quinone oxidoreductase chain 4 1.